The chain runs to 63 residues: Large ribosomal subunit protein bL28 (63 aa).

It belongs to the bacterial ribosomal protein bL28 family.

This is Large ribosomal subunit protein bL28 from Clostridium botulinum (strain Alaska E43 / Type E3).